A 161-amino-acid chain; its full sequence is Allophycocyanin alpha chain (161 aa).

Asn-71 bears the N4-methylasparagine mark. Cys-81 provides a ligand contact to (2R,3E)-phycocyanobilin.

This sequence belongs to the phycobiliprotein family. Heterodimer of an alpha and a beta chain. In terms of processing, contains one covalently linked phycocyanobilin chromophore.

Its subcellular location is the plastid. The protein resides in the cyanelle thylakoid membrane. Functionally, light-harvesting photosynthetic bile pigment-protein from the phycobiliprotein complex. Allophycocyanin has a maximum absorption at approximately 650 nanometers. In Cyanophora paradoxa, this protein is Allophycocyanin alpha chain (apcA).